The chain runs to 429 residues: uncharacterized protein (429 aa).

The next 10 helical transmembrane spans lie at 26–46 (VALT…HDIF), 51–71 (TGID…VGVL), 99–119 (LVLV…VLLI), 135–155 (TSFL…TLVG), 173–193 (FMLH…AVLP), 223–243 (LLVK…AHPV), 278–298 (TLLF…TGVV), 311–331 (GNIV…SGII), 361–381 (WWAL…GASA), and 407–427 (VVTA…YFVL).

It belongs to the CitM (TC 2.A.11) transporter family.

It localises to the cell membrane. This is an uncharacterized protein from Mycobacterium tuberculosis (strain ATCC 25618 / H37Rv).